The following is a 94-amino-acid chain: uncharacterized protein (94 aa).

2 helical membrane-spanning segments follow: residues threonine 9–threonine 29 and leucine 34–valine 54.

The protein resides in the cell membrane. This is an uncharacterized protein from Bacillus subtilis (strain 168).